The chain runs to 491 residues: Lysine--tRNA ligase (491 aa).

Residues Glu400 and Glu407 each contribute to the Mg(2+) site.

It belongs to the class-II aminoacyl-tRNA synthetase family. Homodimer. Mg(2+) serves as cofactor.

Its subcellular location is the cytoplasm. It carries out the reaction tRNA(Lys) + L-lysine + ATP = L-lysyl-tRNA(Lys) + AMP + diphosphate. In Mesomycoplasma hyopneumoniae (strain J / ATCC 25934 / NCTC 10110) (Mycoplasma hyopneumoniae), this protein is Lysine--tRNA ligase.